A 162-amino-acid polypeptide reads, in one-letter code: uncharacterized protein (162 aa).

Residues 29-50 form a C2H2-type zinc finger; sequence CPFCDYTNADAKVVRKHVKSKH. Residues 60-93 are disordered; it reads KLESQKSKNNGKKQTGQKKQGKGKKQPKRVRETC. Over residues 68–87 the composition is skewed to basic residues; the sequence is NNGKKQTGQKKQGKGKKQPK.

This sequence to M.jannaschii MJECS06.

This is an uncharacterized protein from Methanocaldococcus jannaschii (strain ATCC 43067 / DSM 2661 / JAL-1 / JCM 10045 / NBRC 100440) (Methanococcus jannaschii).